A 609-amino-acid chain; its full sequence is UvrABC system protein C (609 aa).

In terms of domain architecture, GIY-YIG spans 19–97 (ASPGCYLWKS…IKKHNPRFNV (79 aa)). The UVR domain occupies 208–243 (ESLVSDLNIKMSNASERLDFEKAARYRDMLQRIQNF).

Belongs to the UvrC family. As to quaternary structure, interacts with UvrB in an incision complex.

The protein resides in the cytoplasm. Its function is as follows. The UvrABC repair system catalyzes the recognition and processing of DNA lesions. UvrC both incises the 5' and 3' sides of the lesion. The N-terminal half is responsible for the 3' incision and the C-terminal half is responsible for the 5' incision. This chain is UvrABC system protein C, found in Leptospira interrogans serogroup Icterohaemorrhagiae serovar Lai (strain 56601).